The sequence spans 216 residues: Uracil phosphoribosyltransferase (216 aa).

30–34 (KNLVR) serves as a coordination point for GTP. Residues arginine 80, arginine 105, and 140-148 (DPMIATAST) contribute to the 5-phospho-alpha-D-ribose 1-diphosphate site. Residues isoleucine 203 and 208–210 (GDA) each bind uracil. Position 209 (aspartate 209) interacts with 5-phospho-alpha-D-ribose 1-diphosphate.

It belongs to the UPRTase family. It depends on Mg(2+) as a cofactor.

The catalysed reaction is UMP + diphosphate = 5-phospho-alpha-D-ribose 1-diphosphate + uracil. The protein operates within pyrimidine metabolism; UMP biosynthesis via salvage pathway; UMP from uracil: step 1/1. Allosterically activated by GTP. Its function is as follows. Catalyzes the conversion of uracil and 5-phospho-alpha-D-ribose 1-diphosphate (PRPP) to UMP and diphosphate. The sequence is that of Uracil phosphoribosyltransferase from Saccharolobus islandicus (strain M.16.4 / Kamchatka #3) (Sulfolobus islandicus).